The chain runs to 519 residues: Aldehyde dehydrogenase, mitochondrial (519 aa).

A mitochondrion-targeting transit peptide spans Met1–Leu19. The SIFI-degron signature appears at Gly12 to Ala26. An N6-acetyllysine mark is found at Lys54, Lys75, Lys80, and Lys161. Gly264–Gly269 serves as a coordination point for NAD(+). The Proton acceptor role is filled by Glu287. The active-site Nucleophile is the Cys321. Residues Lys370, Lys377, Lys385, Lys409, Lys428, Lys430, Lys443, and Lys453 each carry the N6-acetyllysine modification.

It belongs to the aldehyde dehydrogenase family. Homotetramer. In response to mitochondrial stress, the precursor protein is ubiquitinated by the SIFI complex in the cytoplasm before mitochondrial import, leading to its degradation. Within the SIFI complex, UBR4 initiates ubiquitin chain that are further elongated or branched by KCMF1.

The protein localises to the mitochondrion matrix. It carries out the reaction an aldehyde + NAD(+) + H2O = a carboxylate + NADH + 2 H(+). The protein operates within alcohol metabolism; ethanol degradation; acetate from ethanol: step 2/2. In terms of biological role, required for clearance of cellular formaldehyde, a cytotoxic and carcinogenic metabolite that induces DNA damage. The protein is Aldehyde dehydrogenase, mitochondrial (Aldh2) of Rattus norvegicus (Rat).